The following is a 517-amino-acid chain: Crotonobetaine/carnitine--CoA ligase (517 aa).

Belongs to the ATP-dependent AMP-binding enzyme family.

It carries out the reaction 4-(trimethylamino)butanoate + ATP + CoA = 4-(trimethylamino)butanoyl-CoA + AMP + diphosphate. The catalysed reaction is crotonobetaine + ATP + CoA = crotonobetainyl-CoA + AMP + diphosphate. The enzyme catalyses (R)-carnitine + ATP + CoA = (R)-carnitinyl-CoA + AMP + diphosphate. The protein operates within amine and polyamine metabolism; carnitine metabolism. Its function is as follows. Catalyzes the transfer of CoA to carnitine, generating the initial carnitinyl-CoA needed for the CaiB reaction cycle. Also has activity toward crotonobetaine and gamma-butyrobetaine. The sequence is that of Crotonobetaine/carnitine--CoA ligase from Salmonella arizonae (strain ATCC BAA-731 / CDC346-86 / RSK2980).